Consider the following 436-residue polypeptide: Arginine biosynthesis bifunctional protein ArgJ, mitochondrial (436 aa).

T172, K198, T209, E298, N431, and S436 together coordinate substrate. The active-site Nucleophile is the T209.

This sequence belongs to the ArgJ family. As to quaternary structure, heterodimer of an alpha and a beta chain. The alpha and beta chains are autoproteolytically processed from a single precursor protein within the mitochondrion.

It is found in the mitochondrion matrix. It carries out the reaction N(2)-acetyl-L-ornithine + L-glutamate = N-acetyl-L-glutamate + L-ornithine. The enzyme catalyses L-glutamate + acetyl-CoA = N-acetyl-L-glutamate + CoA + H(+). Its pathway is amino-acid biosynthesis; L-arginine biosynthesis; L-ornithine and N-acetyl-L-glutamate from L-glutamate and N(2)-acetyl-L-ornithine (cyclic): step 1/1. The protein operates within amino-acid biosynthesis; L-arginine biosynthesis; N(2)-acetyl-L-ornithine from L-glutamate: step 1/4. In terms of biological role, catalyzes two activities which are involved in the cyclic version of arginine biosynthesis: the synthesis of acetylglutamate from glutamate and acetyl-CoA, and of ornithine by transacetylation between acetylornithine and glutamate. The polypeptide is Arginine biosynthesis bifunctional protein ArgJ, mitochondrial (Meyerozyma guilliermondii (strain ATCC 6260 / CBS 566 / DSM 6381 / JCM 1539 / NBRC 10279 / NRRL Y-324) (Yeast)).